The chain runs to 88 residues: Small ribosomal subunit protein uS17 (88 aa).

The protein belongs to the universal ribosomal protein uS17 family. As to quaternary structure, part of the 30S ribosomal subunit.

Functionally, one of the primary rRNA binding proteins, it binds specifically to the 5'-end of 16S ribosomal RNA. The sequence is that of Small ribosomal subunit protein uS17 from Oleidesulfovibrio alaskensis (strain ATCC BAA-1058 / DSM 17464 / G20) (Desulfovibrio alaskensis).